The primary structure comprises 720 residues: GTPase-activating protein gyp2 (720 aa).

The 66-residue stretch at 20 to 85 (LDPASFFRIN…AAVRKLEREN (66 aa)) folds into the GRAM domain. The 189-residue stretch at 216 to 404 (GIPNNLRADI…RILDCLFVNG (189 aa)) folds into the Rab-GAP TBC domain.

It localises to the cytoplasm. It is found in the nucleus. Functionally, stimulates specifically the GTPase activity of ypt2 and ryh1. Inactivates ryh1 during recycling between the endosome and the Golgi compartments. The sequence is that of GTPase-activating protein gyp2 from Schizosaccharomyces pombe (strain 972 / ATCC 24843) (Fission yeast).